A 447-amino-acid polypeptide reads, in one-letter code: Alliin lyase (447 aa).

Residues Q1–A2 constitute a propeptide that is removed on maturation. One can recognise an EGF-like; atypical domain in the interval E15–A61. The N-linked (GlcNAc...) asparagine glycan is linked to N21. 3 disulfides stabilise this stretch: C22-C41, C43-C52, and C46-C59. Y94–F102 serves as a coordination point for chloride. N148 and N193 each carry an N-linked (GlcNAc...) asparagine glycan. The residue at position 253 (K253) is an N6-(pyridoxal phosphate)lysine. The N-linked (GlcNAc...) asparagine glycan is linked to N330. Cysteines 370 and 378 form a disulfide.

The protein belongs to the alliinase family. In terms of assembly, homodimer. Pyridoxal 5'-phosphate serves as cofactor.

The protein resides in the vacuole. It carries out the reaction an S-alkyl-L-cysteine S-oxide = an S-alkyl sulfenate + 2-aminoprop-2-enoate. The sequence is that of Alliin lyase from Allium cepa var. aggregatum (Shallot).